The sequence spans 338 residues: NAC domain-containing protein 46 (338 aa).

Positions 20–171 constitute an NAC domain; it reads LPPGFRFHPT…EWVVCRVFHK (152 aa). Residues 118-177 mediate DNA binding; it reads VGMKKTLVFYTGRAPKGEKTNWVMHEYRLDGKYSYHNLPKTARDEWVVCRVFHKNAPSTT.

As to quaternary structure, interacts with RCD1.

The protein localises to the nucleus. Its function is as follows. Transcriptional activator that acts as a positive regulator of leaf senescence. Activates NYC1, SGR1, SGR2 and PAO, which are genes involved in chlorophyll catabolic processes. Activates senescence-associated genes, such as RNS1, SAG12 and SAG13. The sequence is that of NAC domain-containing protein 46 from Arabidopsis thaliana (Mouse-ear cress).